The primary structure comprises 273 residues: Bis(5'-nucleosyl)-tetraphosphatase, symmetrical (273 aa).

The protein belongs to the Ap4A hydrolase family.

The catalysed reaction is P(1),P(4)-bis(5'-adenosyl) tetraphosphate + H2O = 2 ADP + 2 H(+). Functionally, hydrolyzes diadenosine 5',5'''-P1,P4-tetraphosphate to yield ADP. The chain is Bis(5'-nucleosyl)-tetraphosphatase, symmetrical from Aromatoleum aromaticum (strain DSM 19018 / LMG 30748 / EbN1) (Azoarcus sp. (strain EbN1)).